A 315-amino-acid chain; its full sequence is Tryptophan prenyltransferase ComQ (315 aa).

Residues D95 and D99 each contribute to the Mg(2+) site.

This sequence belongs to the FPP/GGPP synthase family. It depends on Mg(2+) as a cofactor.

The protein localises to the cell membrane. The catalysed reaction is L-tryptophyl-[protein] + (2E,6E)-farnesyl diphosphate = (2S,3R)-3-farnesyl-2,3-dihydro-2,N(alpha)-cyclo-L-tryptophyl-[protein] + diphosphate. Its function is as follows. Part of a major quorum-sensing system that regulates the development of genetic competence. Involved in the maturation of the competence pheromone ComX. Acts by catalyzing the transfer of a farnesyl group on the ComX pheromone. In vitro, can also catalyze the farnesylation of single tryptophan and tryptophan derivatives. The sequence is that of Tryptophan prenyltransferase ComQ from Bacillus subtilis subsp. natto (strain BEST195).